A 200-amino-acid polypeptide reads, in one-letter code: Putative biotin transporter BioYB (200 aa).

A run of 6 helical transmembrane segments spans residues 13–33 (LIGMFAALMAVGANITSVAPF), 36–56 (VAGIPLSMQPFFCLLAALLLG), 61–81 (AIAMIVYALVGLAGAPVFAQF), 90–110 (GKSGGFIISYIPAAFAAGWFL), 121–141 (FLIASLIGTAIMYLIGTTYMY), and 158–178 (WGFMIWFMVKDTALAVILSFI).

This sequence belongs to the BioY family.

Its subcellular location is the cell membrane. In terms of biological role, putative biotin transporter. The chain is Putative biotin transporter BioYB (bioYB) from Bacillus subtilis (strain 168).